A 930-amino-acid chain; its full sequence is Endoplasmic reticulum aminopeptidase 1 (930 aa).

Residues 1-2 (MP) are Cytoplasmic-facing. A helical; Signal-anchor for type II membrane protein membrane pass occupies residues 3-23 (SLLPLVLTFLSVSSPSWCQNS). The Lumenal segment spans residues 24 to 930 (DIESLKASNG…WLQKEKPELL (907 aa)). N59 and N143 each carry an N-linked (GlcNAc...) asparagine glycan. Residues E172 and 306 to 310 (GAMEN) each bind substrate. H342 contacts Zn(2+). Residue E343 is part of the active site. The Zn(2+) site is built by H346 and E365. C393 and C432 are oxidised to a cystine. Residues N403 and N655 are each glycosylated (N-linked (GlcNAc...) asparagine). C725 and C732 form a disulfide bridge. N749 and N890 each carry an N-linked (GlcNAc...) asparagine glycan.

This sequence belongs to the peptidase M1 family. As to quaternary structure, monomer. May also exist as a heterodimer; with ERAP2. Interacts with RBMX. It depends on Zn(2+) as a cofactor. N-glycosylated.

The protein localises to the endoplasmic reticulum membrane. In terms of biological role, aminopeptidase that plays a central role in peptide trimming, a step required for the generation of most HLA class I-binding peptides. Peptide trimming is essential to customize longer precursor peptides to fit them to the correct length required for presentation on MHC class I molecules. Strongly prefers substrates 9-16 residues long. Rapidly degrades 13-mer to a 9-mer and then stops. Preferentially hydrolyzes the residue Leu and peptides with a hydrophobic C-terminus, while it has weak activity toward peptides with charged C-terminus. May play a role in the inactivation of peptide hormones. May be involved in the regulation of blood pressure through the inactivation of angiotensin II and/or the generation of bradykinin in the kidney. In Mus musculus (Mouse), this protein is Endoplasmic reticulum aminopeptidase 1 (Erap1).